The following is a 124-amino-acid chain: Large ribosomal subunit protein bL12 (124 aa).

It belongs to the bacterial ribosomal protein bL12 family. Homodimer. Part of the ribosomal stalk of the 50S ribosomal subunit. Forms a multimeric L10(L12)X complex, where L10 forms an elongated spine to which 2 to 4 L12 dimers bind in a sequential fashion. Binds GTP-bound translation factors.

Functionally, forms part of the ribosomal stalk which helps the ribosome interact with GTP-bound translation factors. Is thus essential for accurate translation. This is Large ribosomal subunit protein bL12 from Burkholderia cenocepacia (strain ATCC BAA-245 / DSM 16553 / LMG 16656 / NCTC 13227 / J2315 / CF5610) (Burkholderia cepacia (strain J2315)).